The sequence spans 205 residues: Probable transcription factor Ken (205 aa).

3 C2H2-type zinc fingers span residues 106–128 (YRCE…LRVH), 134–157 (FACR…CSVH), and 173–196 (YSCC…SGHH).

The protein resides in the nucleus. Functionally, probable transcription factor, which is required for terminalia development. In Drosophila yakuba (Fruit fly), this protein is Probable transcription factor Ken (ken).